The chain runs to 169 residues: Secretory-abundant heat soluble protein 1 (169 aa).

The signal sequence occupies residues Met-1 to Gly-19. Residues Glu-31–Pro-60 are SAHS-c1. The segment at Trp-75–Glu-103 is SAHS-c2. Residue Asn-109 is glycosylated (N-linked (GlcNAc...) asparagine). The interval Lys-116 to Lys-165 is SAHS-c3.

This sequence belongs to the Secretory-abundant heat soluble protein (SAHS) family.

The protein localises to the secreted. Secreted heat soluble protein acting as a molecular shield in water-deficient condition. Tardigrade-specific intrinsically disordered proteins (TDPs) are essential for desiccation tolerance by forming non-crystalline amorphous solids upon desiccation, and this vitrified state mirrors their protective capabilities. In Ramazzottius varieornatus (Water bear), this protein is Secretory-abundant heat soluble protein 1.